A 146-amino-acid polypeptide reads, in one-letter code: 3-dehydroquinate dehydratase (146 aa).

Tyr-22 functions as the Proton acceptor in the catalytic mechanism. The substrate site is built by Asn-74, His-80, and Asp-87. Residue His-100 is the Proton donor of the active site. Residues 101–102 (LS) and Arg-111 each bind substrate.

Belongs to the type-II 3-dehydroquinase family. As to quaternary structure, homododecamer.

It carries out the reaction 3-dehydroquinate = 3-dehydroshikimate + H2O. The protein operates within metabolic intermediate biosynthesis; chorismate biosynthesis; chorismate from D-erythrose 4-phosphate and phosphoenolpyruvate: step 3/7. Functionally, catalyzes a trans-dehydration via an enolate intermediate. The polypeptide is 3-dehydroquinate dehydratase (Clostridium beijerinckii (strain ATCC 51743 / NCIMB 8052) (Clostridium acetobutylicum)).